We begin with the raw amino-acid sequence, 440 residues long: Gamma-aminobutyric acid receptor subunit pi (440 aa).

An N-terminal signal peptide occupies residues 1–23 (MSYSLYLAFLCLSLLTQRTCIQG). Topologically, residues 24–241 (NQVNVEVSRS…LVLQFELRRN (218 aa)) are extracellular. Residues Asn-43, Asn-102, and Asn-145 are each glycosylated (N-linked (GlcNAc...) asparagine). Cysteines 160 and 174 form a disulfide. 2 N-linked (GlcNAc...) asparagine glycosylation sites follow: Asn-196 and Asn-228. A helical membrane pass occupies residues 242-262 (VLYFILETYVPSTFLVVLSWV). The Cytoplasmic portion of the chain corresponds to 263 to 270 (SFWISLDS). The helical transmembrane segment at 271 to 290 (VPARTCIGVTTVLSMTTLMI) threads the bilayer. Residues 291-301 (GSRTSLPNTNC) lie on the Extracellular side of the membrane. A helical transmembrane segment spans residues 302–322 (FIKAIDVYLGICFSFVFGALL). Over 323–419 (EYAVAHYSSL…NPSNVDRYSK (97 aa)) the chain is Cytoplasmic. The chain crosses the membrane as a helical span at residues 420–440 (LLFPLIFMLANVFYWAYYMYF).

It belongs to the ligand-gated ion channel (TC 1.A.9) family. Gamma-aminobutyric acid receptor (TC 1.A.9.5) subfamily. GABRP sub-subfamily. As to quaternary structure, heteropentamer, formed by a combination of alpha (GABRA1-6), beta (GABRB1-3), gamma (GABRG1-3), delta (GABRD), epsilon (GABRE), rho (GABRR1-3), pi (GABRP) and theta (GABRQ) chains, each subunit exhibiting distinct physiological and pharmacological properties.

It is found in the cell membrane. Its subcellular location is the apical cell membrane. The enzyme catalyses chloride(in) = chloride(out). Functionally, pi subunit of the heteropentameric ligand-gated chloride channel gated by gamma-aminobutyric acid (GABA). GABA-gated chloride channels, also named GABA(A) receptors (GABAAR), consist of five subunits arranged around a central pore and contain GABA active binding site(s) located at the alpha and beta subunit interfaces. When activated by GABA, GABAARs selectively allow the flow of chloride anions across the cell membrane down their electrochemical gradient. Pi-containing GABAARs are mostly located in peripheral tissues. In the uterus, pi subunits modulate uterus contraction by altering the sensitivity of GABAARs to pregnanolone. In the lungs, pi-containing GABAARs contribute to pulmonary fluid transport via luminal secretion of chloride. The chain is Gamma-aminobutyric acid receptor subunit pi from Mus musculus (Mouse).